Consider the following 430-residue polypeptide: Asparagine--tRNA ligase (430 aa).

This sequence belongs to the class-II aminoacyl-tRNA synthetase family. As to quaternary structure, homodimer.

It is found in the cytoplasm. The enzyme catalyses tRNA(Asn) + L-asparagine + ATP = L-asparaginyl-tRNA(Asn) + AMP + diphosphate + H(+). The protein is Asparagine--tRNA ligase of Staphylococcus aureus (strain MSSA476).